The sequence spans 669 residues: UvrABC system protein B (669 aa).

A Helicase ATP-binding domain is found at 26–183 (TNFHAGIAKQ…RHLTELQYTR (158 aa)). ATP is bound at residue 39–46 (GVTGSGKT). The Beta-hairpin motif lies at 92–115 (YYDYYQPEAYVPASDTFIEKDSSI). The Helicase C-terminal domain occupies 431–597 (QVDDLISQIN…SVVRPISDIL (167 aa)). A UVR domain is found at 631 to 666 (AAQMKVLEQKMYQHARDLEFEDAARIRDQIQRLREA).

The protein belongs to the UvrB family. As to quaternary structure, forms a heterotetramer with UvrA during the search for lesions. Interacts with UvrC in an incision complex.

The protein resides in the cytoplasm. The UvrABC repair system catalyzes the recognition and processing of DNA lesions. A damage recognition complex composed of 2 UvrA and 2 UvrB subunits scans DNA for abnormalities. Upon binding of the UvrA(2)B(2) complex to a putative damaged site, the DNA wraps around one UvrB monomer. DNA wrap is dependent on ATP binding by UvrB and probably causes local melting of the DNA helix, facilitating insertion of UvrB beta-hairpin between the DNA strands. Then UvrB probes one DNA strand for the presence of a lesion. If a lesion is found the UvrA subunits dissociate and the UvrB-DNA preincision complex is formed. This complex is subsequently bound by UvrC and the second UvrB is released. If no lesion is found, the DNA wraps around the other UvrB subunit that will check the other stand for damage. The protein is UvrABC system protein B of Xylella fastidiosa (strain M23).